The sequence spans 265 residues: Cell division protein FtsQ (265 aa).

A compositionally biased stretch (low complexity) spans 1 to 13; sequence MAGATTAKGGARR. The disordered stretch occupies residues 1–25; sequence MAGATTAKGGARRTPPPGPPPPALK. At 1–35 the chain is on the cytoplasmic side; the sequence is MAGATTAKGGARRTPPPGPPPPALKARRRLRLPRR. The segment covering 14 to 23 has biased composition (pro residues); that stretch reads TPPPGPPPPA. A helical transmembrane segment spans residues 36–58; it reads RTLLVTGVATALLGSGVTWLLYG. Topologically, residues 59–265 are extracellular; that stretch reads SSWLRVEQVA…APTAPAVTHS (207 aa). The region spanning 62–131 is the POTRA domain; it reads LRVEQVAVSG…DTIAVRVTER (70 aa).

The protein belongs to the FtsQ/DivIB family. FtsQ subfamily.

The protein resides in the cell membrane. Functionally, essential cell division protein. The chain is Cell division protein FtsQ from Streptomyces bingchenggensis (strain BCW-1).